A 224-amino-acid polypeptide reads, in one-letter code: MGQKVHPIGFRLGVIRSWDSKWYEEKNYAKWLHEDIKLREFVKEKLGQAGISRIEIERAANKVKINVHTARPGIVIGKRGAGIETIKKDLQGLTDNEVYLNVVEVRKAETDAQLVAENIATQLERRIAFRRAMKKSVQTALKFGAKGIRVACSGRLGGSEMARYEWYREGRVPLHTLRADIDYGFAEAKTTYGKIGCKVWIMRGEVLPQSAAARAPRTTGGARP.

The KH type-2 domain occupies L38 to R106.

This sequence belongs to the universal ribosomal protein uS3 family. In terms of assembly, part of the 30S ribosomal subunit. Forms a tight complex with proteins S10 and S14.

Its function is as follows. Binds the lower part of the 30S subunit head. Binds mRNA in the 70S ribosome, positioning it for translation. The protein is Small ribosomal subunit protein uS3 of Anaeromyxobacter dehalogenans (strain 2CP-1 / ATCC BAA-258).